The sequence spans 420 residues: Fasciclin-like arabinogalactan protein 8 (420 aa).

The N-terminal stretch at 1 to 25 (MAASQTFSLLAFTFSLLAFASTVSS) is a signal peptide. 2 consecutive FAS1 domains span residues 26–172 (HNIT…DAPI) and 186–326 (SLSN…DNVL). Asn-27, Asn-128, Asn-162, Asn-189, and Asn-273 each carry an N-linked (GlcNAc...) asparagine glycan. Residues 335-394 (SKSPSPAPAPEPVTAPTPSPADAPSPTAASPPAPPTDESPESAPSDSPTGSANSKSANAA) form a disordered region. A compositionally biased stretch (pro residues) spans 339 to 371 (SPAPAPEPVTAPTPSPADAPSPTAASPPAPPTD). A lipid anchor (GPI-anchor amidated asparagine) is attached at Asn-392. Positions 393–420 (AAVGVSTPSLFTALVTIAAIAVSVSLCS) are cleaved as a propeptide — removed in mature form.

The protein belongs to the fasciclin-like AGP family. As to expression, expressed mainly in flowers and to a lesser extent in leaves and roots.

It is found in the cell membrane. Functionally, may be a cell surface adhesion protein. This Arabidopsis thaliana (Mouse-ear cress) protein is Fasciclin-like arabinogalactan protein 8 (FLA8).